The following is a 716-amino-acid chain: Protein Hook homolog 2 (716 aa).

Positions 1–161 are required for localization to the centrosome and induction of aggresome formation; that stretch reads MSVDKAELCG…ELMTKDTPDS (161 aa). The sufficient for interaction with microtubules stretch occupies residues 1–546; it reads MSVDKAELCG…LKRKLEDHLQ (546 aa). Residues 6–122 enclose the Calponin-homology (CH) domain; it reads AELCGSLLTW…KLLQLVLGCA (117 aa). Ser163 is subject to Phosphoserine. Coiled coils occupy residues 188-427 and 455-605; these read DHLQ…AQLQ and AELR…VDKA. Positions 533–716 are required for localization to the centrosome and induction of aggresome formation; the sequence is DPTLLKRKLE…ALSLRPTDKH (184 aa). The tract at residues 582–716 is sufficient for interaction with CNTRL; sequence DSLQKKDADL…ALSLRPTDKH (135 aa).

Belongs to the hook family. As to quaternary structure, self-associates. Component of the FTS/Hook/FHIP complex (FHF complex), composed of AKTIP/FTS, FHIP1B, and one or more members of the Hook family of proteins HOOK1, HOOK2, and HOOK3. May interact directly with AKTIP/FTS, HOOK1 and HOOK3. Associates with several subunits of the homotypic vesicular sorting complex (the HOPS complex) including VPS16 and VPS41; these interactions may be indirect. Interacts with CNTRL. Interacts with microtubules. Interacts with ZC3H14. Interacts with LRGUK (via guanylate kinase-like domain). Interacts with CCDC181. Interacts with AP4M1; the interaction is direct, mediates the interaction between FTS-Hook-FHIP (FHF) complex and AP-4 and the perinuclear distribution of AP-4. Expressed in brain, cerebellum, kidney, liver and heart, with highest levels in heart and kidney (at protein level).

It is found in the cytoplasm. The protein resides in the cytoskeleton. Its subcellular location is the microtubule organizing center. The protein localises to the centrosome. It localises to the golgi apparatus. It is found in the trans-Golgi network. Its function is as follows. Component of the FTS/Hook/FHIP complex (FHF complex). The FHF complex may function to promote vesicle trafficking and/or fusion via the homotypic vesicular protein sorting complex (the HOPS complex). Contributes to the establishment and maintenance of centrosome function. May function in the positioning or formation of aggresomes, which are pericentriolar accumulations of misfolded proteins, proteasomes and chaperones. FHF complex promotes the distribution of AP-4 complex to the perinuclear area of the cell. The polypeptide is Protein Hook homolog 2 (Hook2) (Mus musculus (Mouse)).